The chain runs to 436 residues: GTPase Obg (436 aa).

Positions 2–160 constitute an Obg domain; it reads SMFLDTAKIK…RELQLELKIL (159 aa). The 178-residue stretch at 161–338 folds into the OBG-type G domain; it reads ADVGLVGFPS…LLDATAELLD (178 aa). GTP-binding positions include 167–174, 192–196, 214–217, 284–287, and 319–321; these read GFPSVGKS, FTTIV, DLPG, NKMD, and SGL. 2 residues coordinate Mg(2+): serine 174 and threonine 194. Residues 358–436 form the OCT domain; that stretch reads GFDEEEKAFE…IGKFEFEFVD (79 aa).

Belongs to the TRAFAC class OBG-HflX-like GTPase superfamily. OBG GTPase family. As to quaternary structure, monomer. It depends on Mg(2+) as a cofactor.

The protein resides in the cytoplasm. Its function is as follows. An essential GTPase which binds GTP, GDP and possibly (p)ppGpp with moderate affinity, with high nucleotide exchange rates and a fairly low GTP hydrolysis rate. Plays a role in control of the cell cycle, stress response, ribosome biogenesis and in those bacteria that undergo differentiation, in morphogenesis control. The protein is GTPase Obg of Streptococcus pneumoniae serotype 2 (strain D39 / NCTC 7466).